Reading from the N-terminus, the 682-residue chain is Methionine--tRNA ligase (682 aa).

The short motif at 15–25 is the 'HIGH' region element; that stretch reads PYANGAIHLGH. Residues Cys-146, Cys-149, Cys-159, and Cys-162 each contribute to the Zn(2+) site. The 'KMSKS' region motif lies at 331 to 335; that stretch reads KMSKS. An ATP-binding site is contributed by Lys-334. In terms of domain architecture, tRNA-binding spans 580–682; that stretch reads DFAKLDLRVA…QGVKPGMQVK (103 aa).

The protein belongs to the class-I aminoacyl-tRNA synthetase family. MetG type 1 subfamily. As to quaternary structure, homodimer. Requires Zn(2+) as cofactor.

Its subcellular location is the cytoplasm. The enzyme catalyses tRNA(Met) + L-methionine + ATP = L-methionyl-tRNA(Met) + AMP + diphosphate. Its function is as follows. Is required not only for elongation of protein synthesis but also for the initiation of all mRNA translation through initiator tRNA(fMet) aminoacylation. This Pasteurella multocida (strain Pm70) protein is Methionine--tRNA ligase.